Consider the following 468-residue polypeptide: MTVRPRPAAAAIIIAAVFGAAAAAAGGGMVGVDGTQFVVEGGRTIYFSGFNAYWLMMMASDPARRAAVVAAFAQASSRGLNLARTWAFSDGGDQPLQSSPGVYDEAMFQGLDFVIAEARRHGIYLLLCLTNNFDDFGGKRQYVRWAADAGHNLTAGDDFFTSSVVKSYYKNHVKAVLTRVNTVTGVAYKDDPTIFAWELMNEPRCDADPTGGMVQAWVEEMAPYVKRVDGGRHLVTAGLEGFYGDGEHESKELNPWGIYYGTNYVATHRAAGVDFATIHLYPDVWLWGSTADEQAAFFRNWTRSHVHDTAAFLGKPLLVTEYGKFLWKGGGANKTQRNYFLDVVLDAIYASASRGGPLVGGAFWQLLLDDDVVAGMDDLRDGYEIILAEDSRAASIIGEHSEQLASLNGQDAEALRRRRRRPASSHRKTRLGSGGDSDALRLPRTLLIRFISLSRSISSFIQDNFVLF.

The signal sequence occupies residues 1-23; the sequence is MTVRPRPAAAAIIIAAVFGAAAA. Position 86 (Trp86) interacts with substrate. Asn152 carries an N-linked (GlcNAc...) asparagine glycan. Asn201 contacts substrate. The active-site Proton donor is Glu202. A substrate-binding site is contributed by Tyr281. Asn300 carries an N-linked (GlcNAc...) asparagine glycan. The active-site Nucleophile is the Glu321. N-linked (GlcNAc...) asparagine glycosylation occurs at Asn333. Substrate-binding residues include Trp364 and Asp371. The disordered stretch occupies residues 415–436; it reads LRRRRRRPASSHRKTRLGSGGD. Residues 416 to 430 show a composition bias toward basic residues; it reads RRRRRRPASSHRKTR.

It belongs to the glycosyl hydrolase 5 (cellulase A) family. As to expression, expressed in seeds.

The protein resides in the secreted. The enzyme catalyses Random hydrolysis of (1-&gt;4)-beta-D-mannosidic linkages in mannans, galactomannans and glucomannans.. This is Mannan endo-1,4-beta-mannosidase 3 (MAN3) from Oryza sativa subsp. japonica (Rice).